The primary structure comprises 208 residues: Small ribosomal subunit protein uS4 (208 aa).

Residues 98–161 (LRLDNVVFRL…RKVVRISEAL (64 aa)) form the S4 RNA-binding domain.

It belongs to the universal ribosomal protein uS4 family. In terms of assembly, part of the 30S ribosomal subunit. Contacts protein S5. The interaction surface between S4 and S5 is involved in control of translational fidelity.

Its function is as follows. One of the primary rRNA binding proteins, it binds directly to 16S rRNA where it nucleates assembly of the body of the 30S subunit. Functionally, with S5 and S12 plays an important role in translational accuracy. The sequence is that of Small ribosomal subunit protein uS4 from Anaeromyxobacter sp. (strain Fw109-5).